Consider the following 369-residue polypeptide: Probable trehalose-phosphate phosphatase D (369 aa).

A disordered region spans residues 63 to 85 (RASSPTRTRPGNISPLPESDEED).

The protein belongs to the trehalose phosphatase family. A divalent metal cation serves as cofactor.

The enzyme catalyses alpha,alpha-trehalose 6-phosphate + H2O = alpha,alpha-trehalose + phosphate. Its pathway is glycan biosynthesis; trehalose biosynthesis. Functionally, removes the phosphate from trehalose 6-phosphate to produce free trehalose. Trehalose accumulation in plant may improve abiotic stress tolerance. The protein is Probable trehalose-phosphate phosphatase D (TPPD) of Arabidopsis thaliana (Mouse-ear cress).